Consider the following 413-residue polypeptide: Monacolin J acid methylbutanoyltransferase (413 aa).

Residue R73 participates in monacolin J binding. S76 serves as the catalytic Acyl-ester intermediate. Monacolin J-binding residues include R173, Y188, and Y258. Position 366 (G366) interacts with 2-methylbutanoate. Monacolin J-binding residues include E388 and W390.

Belongs to the class-A beta-lactamase family. As to quaternary structure, interacts with LovF.

The enzyme catalyses monacolin J carboxylate + (S)-2-methylbutanoyl-[2-methylbutanoate polyketide synthase] = lovastatin carboxylate + holo-[2-methylbutanoate polyketide synthase]. It functions in the pathway polyketide biosynthesis; lovastatin biosynthesis. Functionally, monacolin J acid methylbutanoyltransferase; part of the gene cluster that mediates the biosynthesis of lovastatin (also known as mevinolin, mevacor or monacolin K), a hypolipidemic inhibitor of (3S)-hydroxymethylglutaryl-coenzyme A (HMG-CoA) reductase (HMGR). The first step in the biosynthesis of lovastatin is the production of dihydromonacolin L acid by the lovastatin nonaketide synthase lovB and the trans-acting enoyl reductase lovC via condensation of one acetyl-CoA unit and 8 malonyl-CoA units. Dihydromonacolin L acid is released from lovB by the thioesterase lovG. Next, dihydromonacolin L acid is oxidized by the dihydromonacolin L monooxygenase lovA twice to form monacolin J acid. The 2-methylbutyrate moiety of lovastatin is synthesized by the lovastatin diketide synthase lovF via condensation of one acetyl-CoA unit and one malonyl-CoA unit. Finally, the covalent attachment of this moiety to monacolin J acid is catalyzed by the transesterase lovD to yield lovastatin. LovD has broad substrate specificity and can also convert monacolin J to simvastatin using alpha-dimethylbutanoyl-S-methyl-3-mercaptopropionate (DMB-S-MMP) as the thioester acyl donor, and can also catalyze the reverse reaction and function as hydrolase in vitro. LovD has much higher activity with LovF-bound 2-methylbutanoate than with free diketide substrates. The polypeptide is Monacolin J acid methylbutanoyltransferase (Aspergillus terreus (strain NIH 2624 / FGSC A1156)).